Reading from the N-terminus, the 115-residue chain is Large ribosomal subunit protein bL35m (115 aa).

It belongs to the bacterial ribosomal protein bL35 family.

Its subcellular location is the mitochondrion. This Saccharomyces cerevisiae (strain YJM789) (Baker's yeast) protein is Large ribosomal subunit protein bL35m.